Here is a 428-residue protein sequence, read N- to C-terminus: Glutamate-1-semialdehyde 2,1-aminomutase (428 aa).

Lys265 bears the N6-(pyridoxal phosphate)lysine mark.

The protein belongs to the class-III pyridoxal-phosphate-dependent aminotransferase family. HemL subfamily. As to quaternary structure, homodimer. Pyridoxal 5'-phosphate is required as a cofactor.

The protein resides in the cytoplasm. It carries out the reaction (S)-4-amino-5-oxopentanoate = 5-aminolevulinate. Its pathway is porphyrin-containing compound metabolism; protoporphyrin-IX biosynthesis; 5-aminolevulinate from L-glutamyl-tRNA(Glu): step 2/2. This Vesicomyosocius okutanii subsp. Calyptogena okutanii (strain HA) protein is Glutamate-1-semialdehyde 2,1-aminomutase.